The chain runs to 580 residues: Fumarate hydratase class I, aerobic (580 aa).

The [4Fe-4S] cluster site is built by C105, C224, and C318.

This sequence belongs to the class-I fumarase family. In terms of assembly, homodimer. Requires [4Fe-4S] cluster as cofactor.

The enzyme catalyses (S)-malate = fumarate + H2O. It carries out the reaction oxaloacetate = enol-oxaloacetate. The protein operates within carbohydrate metabolism; tricarboxylic acid cycle; (S)-malate from fumarate: step 1/1. Catalyzes the reversible hydration of fumarate to (S)-malate. Functions as an aerobic enzyme in the direction of malate formation as part of the citric acid cycle. Accounts for about 80% of the fumarase activity when the bacteria grow aerobically. To a lesser extent, also displays D-tartrate dehydratase activity in vitro, but is not able to convert (R)-malate, L-tartrate or meso-tartrate. Can also catalyze the isomerization of enol- to keto-oxaloacetate. This chain is Fumarate hydratase class I, aerobic, found in Salmonella typhimurium (strain LT2 / SGSC1412 / ATCC 700720).